The sequence spans 1012 residues: Translation initiation factor IF-2, chloroplastic (1012 aa).

Residues 75–102 show a composition bias toward low complexity; that stretch reads GNSVSLDSNSNSSSSSKSGGDDGTGFVL. Disordered stretches follow at residues 75-132, 147-294, and 319-340; these read GNSV…VEER, EKLG…KEKK, and APPK…RKKG. The span at 152 to 175 shows a compositional bias: polar residues; sequence SKVNGDKNNGSVNKPVRNNANASP. A compositionally biased stretch (low complexity) spans 183 to 194; the sequence is SAASLKSKTLKS. A compositionally biased stretch (basic and acidic residues) spans 208-231; sequence VVKEVPKPSYNKNEEEKSQTRGGE. Residues 240-257 show a composition bias toward pro residues; sequence PQPPSKPQPLKPQQPSKP. A compositionally biased stretch (basic and acidic residues) spans 277-294; it reads VLRDKGAAETSVKSKEKK. The tr-type G domain maps to 488–661; that stretch reads DRPPVITIMG…MLVAELQELK (174 aa). The tract at residues 497–504 is G1; sequence GHVDHGKT. 497–504 contributes to the GTP binding site; it reads GHVDHGKT. The segment at 522 to 526 is G2; that stretch reads GITQG. The tract at residues 547–550 is G3; it reads DTPG. GTP is bound by residues 547 to 551 and 601 to 604; these read DTPGH and NKID. Positions 601–604 are G4; that stretch reads NKID. The tract at residues 637–639 is G5; it reads SAL.

Belongs to the TRAFAC class translation factor GTPase superfamily. Classic translation factor GTPase family. IF-2 subfamily.

It is found in the plastid. It localises to the chloroplast. One of the essential components for the initiation of protein synthesis. Protects formylmethionyl-tRNA from spontaneous hydrolysis and promotes its binding to the 30S ribosomal subunits. Also involved in the hydrolysis of GTP during the formation of the 70S ribosomal complex. This chain is Translation initiation factor IF-2, chloroplastic (IF2CP), found in Phaseolus vulgaris (Kidney bean).